Here is a 139-residue protein sequence, read N- to C-terminus: Small ribosomal subunit protein bS6 (139 aa).

Positions 120–139 (KGASKVETPTGPESTDIQEK) are disordered. The span at 130–139 (GPESTDIQEK) shows a compositional bias: polar residues.

This sequence belongs to the bacterial ribosomal protein bS6 family.

Functionally, binds together with bS18 to 16S ribosomal RNA. The sequence is that of Small ribosomal subunit protein bS6 (rpsF) from Borreliella burgdorferi (strain ATCC 35210 / DSM 4680 / CIP 102532 / B31) (Borrelia burgdorferi).